The primary structure comprises 433 residues: Steroid C26-monooxygenase (433 aa).

Residue Gly-202 participates in substrate binding. Cys-377 contributes to the heme binding site.

It belongs to the cytochrome P450 family. Heme is required as a cofactor.

It catalyses the reaction cholest-4-en-3-one + 6 reduced [2Fe-2S]-[ferredoxin] + 3 O2 + 5 H(+) = (25S)-3-oxocholest-4-en-26-oate + 6 oxidized [2Fe-2S]-[ferredoxin] + 4 H2O. It participates in steroid metabolism; cholesterol degradation. In terms of biological role, involved in the utilization of cholesterol as the sole carbon and energy source by degrading the side chain during infection. Primarily catalyzes the sequential oxidation of the terminal methyl of cholest-4-en-3-one into (25S)-26-hydroxycholest-4-en-3-one (alcohol), (25S)-26-oxocholest-4-en-3-one (aldehyde), to finally yield the carboxylic acid (25S)-3-oxocholest-4-en-26-oate. Also able to sequentially oxidize cholesterol itself, not only cholest-4-en-3-one. The chain is Steroid C26-monooxygenase (cyp125) from Mycobacterium bovis (strain ATCC BAA-935 / AF2122/97).